The primary structure comprises 91 residues: Non-hemolytic enterotoxin 105 kDa component (91 aa).

It depends on Zn(2+) as a cofactor.

The protein resides in the secreted. Its function is as follows. This protein is a metalloprotease with gelatinolytic and collagenolytic activity and is a component of the non-hemolytic enterotoxin complex (NHE). The chain is Non-hemolytic enterotoxin 105 kDa component from Bacillus cereus.